We begin with the raw amino-acid sequence, 338 residues long: Serine/threonine-protein kinase YabT (338 aa).

Residues 28–286 enclose the Protein kinase domain; the sequence is YTLRKQLGKG…PIKASPQPAT (259 aa). ATP is bound by residues 34–42 and K55; that span reads LGKGANGIV. D148 acts as the Proton acceptor in catalysis. The segment at 266 to 312 is disordered; sequence DAGQKAAQRKQPIKASPQPATRQRQQKPRQGKITKTRYTPKQKPAKS. Over residues 289 to 309 the composition is skewed to basic residues; sequence RQQKPRQGKITKTRYTPKQKP.

This sequence belongs to the protein kinase superfamily. Ser/Thr protein kinase family. Autophosphorylated.

The enzyme catalyses L-seryl-[protein] + ATP = O-phospho-L-seryl-[protein] + ADP + H(+). The catalysed reaction is L-threonyl-[protein] + ATP = O-phospho-L-threonyl-[protein] + ADP + H(+). Functionally, plays a role in the cell's commitment to sporulation; phosphorylates DNA replication initiation-control protein YabA. Deletion of this kinase delays entry into sporulation but does not affect final spore yield. Overexpression decreases biofilm formation; phosphorylation of YabA probably prevents biofilm formation. This is Serine/threonine-protein kinase YabT (yabT) from Bacillus subtilis (strain 168).